Reading from the N-terminus, the 283-residue chain is Putative sugar uptake protein BA_0200/GBAA_0200/BAS0200 (283 aa).

The next 10 helical transmembrane spans lie at 4 to 21 (LLALLPAIAWGNILLVSV), 26 to 48 (GAYSQTVGMTIGALFFATIMYVF), 52 to 71 (ALTMTILIVGFISGLFWALG), 84 to 106 (VSTTVTISTGMQLVATSIFGVIA), 110 to 132 (WTTTTTIILGTIAILLIVVGVVF), 151 to 173 (LLTLIVSTFGYLVYVIIIRWYNI), 178 to 195 (AILPQAVGMFVGAVVLTS), 208 to 230 (ALSGLLWGTGNLFLLLSLPRVGV), 234 to 253 (FPLSQTGIVISTFGAIVFLG), and 260 to 279 (QLIFIALGSVLIIGGAVLLG).

It belongs to the GRP transporter (TC 2.A.7.5) family.

It is found in the cell membrane. The sequence is that of Putative sugar uptake protein BA_0200/GBAA_0200/BAS0200 from Bacillus anthracis.